Here is a 385-residue protein sequence, read N- to C-terminus: Galactokinase (385 aa).

E34–D37 contacts substrate. S124 to S130 is an ATP binding site. Mg(2+) is bound by residues S130 and E162. The active-site Proton acceptor is the D174. Position 223 (Y223) interacts with substrate.

It belongs to the GHMP kinase family. GalK subfamily.

It is found in the cytoplasm. It carries out the reaction alpha-D-galactose + ATP = alpha-D-galactose 1-phosphate + ADP + H(+). It participates in carbohydrate metabolism; galactose metabolism. In terms of biological role, catalyzes the transfer of the gamma-phosphate of ATP to D-galactose to form alpha-D-galactose-1-phosphate (Gal-1-P). The polypeptide is Galactokinase (Mannheimia succiniciproducens (strain KCTC 0769BP / MBEL55E)).